We begin with the raw amino-acid sequence, 233 residues long: UPF0502 protein Mpe_A1449 (233 aa).

This sequence belongs to the UPF0502 family.

The polypeptide is UPF0502 protein Mpe_A1449 (Methylibium petroleiphilum (strain ATCC BAA-1232 / LMG 22953 / PM1)).